The primary structure comprises 108 residues: UPF0235 protein RB8260 (108 aa).

Belongs to the UPF0235 family.

This Rhodopirellula baltica (strain DSM 10527 / NCIMB 13988 / SH1) protein is UPF0235 protein RB8260.